Consider the following 528-residue polypeptide: GMP synthase [glutamine-hydrolyzing] (528 aa).

The Glutamine amidotransferase type-1 domain maps to 3–199 (KVAIIDFGSQ…FLDIAGCQKD (197 aa)). Residue Cys-83 is the Nucleophile of the active site. Active-site residues include His-174 and Glu-176. The GMPS ATP-PPase domain occupies 200-394 (WTVTSFIDDQ…LGISTEILMR (195 aa)). An ATP-binding site is contributed by 227–233 (SGGVDSS).

In terms of assembly, homodimer.

The enzyme catalyses XMP + L-glutamine + ATP + H2O = GMP + L-glutamate + AMP + diphosphate + 2 H(+). It functions in the pathway purine metabolism; GMP biosynthesis; GMP from XMP (L-Gln route): step 1/1. Its function is as follows. Catalyzes the synthesis of GMP from XMP. The polypeptide is GMP synthase [glutamine-hydrolyzing] (Ehrlichia ruminantium (strain Gardel)).